A 164-amino-acid polypeptide reads, in one-letter code: MTCQTYNLFVLSVIMIYYGHTASSLNLVQLQDDIDKLKADFNSSHSDVADGGPIFIEKLKNWTGSNEKKIILSQIVSMYLEMFENTDQSKPHIKHISEELCTLRDSLSDGVKKVKDLMDLAKLQMTDLRIQRKAANELFIVLQKLVDPPSLKRKRNQPQRRCNC.

A signal peptide spans 1–19 (MTCQTYNLFVLSVIMIYYG). Residues Asn-42 and Asn-61 are each glycosylated (N-linked (GlcNAc...) asparagine).

The protein belongs to the type II (or gamma) interferon family. Homodimer.

The protein resides in the secreted. Produced by lymphocytes activated by specific antigens or mitogens. IFN-gamma, in addition to having antiviral activity, has important immunoregulatory functions. It is a potent activator of macrophages, it has antiproliferative effects on transformed cells and it can potentiate the antiviral and antitumor effects of the type I interferons. This Numida meleagris (Helmeted guineafowl) protein is Interferon gamma (IFNG).